The sequence spans 161 residues: Phosphopantetheine adenylyltransferase (161 aa).

Substrate is bound at residue serine 9. Residues 9–10 (SF) and histidine 17 each bind ATP. Lysine 41, threonine 73, and arginine 87 together coordinate substrate. Residues 88–90 (GLR), glutamate 98, and 123–129 (YSFISST) each bind ATP.

The protein belongs to the bacterial CoaD family. As to quaternary structure, homohexamer. Requires Mg(2+) as cofactor.

Its subcellular location is the cytoplasm. It catalyses the reaction (R)-4'-phosphopantetheine + ATP + H(+) = 3'-dephospho-CoA + diphosphate. It participates in cofactor biosynthesis; coenzyme A biosynthesis; CoA from (R)-pantothenate: step 4/5. In terms of biological role, reversibly transfers an adenylyl group from ATP to 4'-phosphopantetheine, yielding dephospho-CoA (dPCoA) and pyrophosphate. This is Phosphopantetheine adenylyltransferase from Desulforamulus reducens (strain ATCC BAA-1160 / DSM 100696 / MI-1) (Desulfotomaculum reducens).